Reading from the N-terminus, the 401-residue chain is Chromatin modification-related protein EAF3 (401 aa).

The Tudor-knot domain occupies 13-98 (RCLAFHGPLM…DEWVGYDRIR (86 aa)). A compositionally biased stretch (polar residues) spans 39-53 (TSIPNDKPGGSSQAT). Disordered regions lie at residues 39-65 (TSIP…GEDE) and 117-210 (EAKK…NMLH). 2 stretches are compositionally biased toward basic and acidic residues: residues 54–63 (KEIKPQKLGE) and 117–126 (EAKKSLLEQQ). Residues 153–190 (SISKSTSQSFLTSSVSGRKSGRSSANSLHPGSSLRSSS) are compositionally biased toward low complexity. The residue at position 201 (Ser201) is a Phosphoserine. The 184-residue stretch at 216-399 (PTPKISLQIP…TSSQYEGVAL (184 aa)) folds into the MRG domain.

This sequence belongs to the MRG family. Component of the NuA4 histone acetyltransferase complex composed of at least ACT1, ARP4, YAF9, VID21, SWC4, EAF3, EAF5, EAF6, EAF7, EPL1, ESA1, TRA1 and YNG2.

It is found in the nucleus. In terms of biological role, component of the NuA4 histone acetyltransferase complex which is involved in transcriptional activation of selected genes principally by acetylation of nucleosomal histone H4 and H2A. The NuA4 complex is also involved in DNA repair. In Saccharomyces cerevisiae (strain ATCC 204508 / S288c) (Baker's yeast), this protein is Chromatin modification-related protein EAF3 (EAF3).